A 501-amino-acid polypeptide reads, in one-letter code: Flagellin (501 aa).

The protein belongs to the bacterial flagellin family.

It localises to the secreted. Its subcellular location is the bacterial flagellum. In terms of biological role, flagellin is the subunit protein which polymerizes to form the filaments of bacterial flagella. This is Flagellin (flaA) from Aquifex pyrophilus.